We begin with the raw amino-acid sequence, 114 residues long: Iron-sulfur cluster insertion protein ErpA (114 aa).

The iron-sulfur cluster site is built by Cys-42, Cys-106, and Cys-108.

This sequence belongs to the HesB/IscA family. In terms of assembly, homodimer. It depends on iron-sulfur cluster as a cofactor.

Required for insertion of 4Fe-4S clusters for at least IspG. This chain is Iron-sulfur cluster insertion protein ErpA, found in Buchnera aphidicola subsp. Acyrthosiphon pisum (strain 5A).